A 392-amino-acid chain; its full sequence is GDP-mannose transporter (392 aa).

The span at 1-11 shows a compositional bias: basic and acidic residues; it reads MDDKKNEDLEM. Positions 1–25 are disordered; it reads MDDKKNEDLEMRNFNGRSSPSQRDP. Residues 1-45 lie on the Cytoplasmic side of the membrane; sequence MDDKKNEDLEMRNFNGRSSPSQRDPFLAKPGAAAKRGNSAFDLSN. The chain crosses the membrane as a helical span at residues 46-66; sequence VTNSPGISILAYCLASISMTV. Topologically, residues 67 to 76 are lumenal; that stretch reads TNKYCVSGSN. A helical membrane pass occupies residues 77 to 97; the sequence is WNLNFFYLAIQSVVCIIAIII. Residues 98–116 lie on the Cytoplasmic side of the membrane; sequence CKQAGLITNLAPFDTKKAK. The chain crosses the membrane as a helical span at residues 117 to 139; that stretch reads TWFPISLLLVGMIYTSTKALQFL. Residues 140–142 are Lumenal-facing; it reads SVP. The helical transmembrane segment at 143-165 threads the bilayer; the sequence is VYTIFKNLTIIVIAYGEVLWFGG. At 166 to 171 the chain is on the cytoplasmic side; it reads SVTPSA. A helical transmembrane segment spans residues 172 to 191; that stretch reads LFSFGLMVLSSVVAAWADIQ. Over 192–210 the chain is Lumenal; that stretch reads HALYGGGAAQSAEAAAALS. Residues 211–231 traverse the membrane as a helical segment; sequence TLNAGYAWMGMNVFCTAAYVL. The Cytoplasmic portion of the chain corresponds to 232 to 246; it reads SMRKVIKKMNFKDWD. Residues 247–267 traverse the membrane as a helical segment; that stretch reads TMFYNNLLTIPVLFVCSFIFE. Asn268 and Asn273 each carry an N-linked (GlcNAc...) asparagine glycan. Topologically, residues 268–285 are lumenal; sequence NWSSENLTKNFPLETRNN. Residues 286–306 traverse the membrane as a helical segment; sequence LILGMIYSGLATIFISYCSAW. The Cytoplasmic portion of the chain corresponds to 307-314; sequence CIRVTSST. A helical membrane pass occupies residues 315–337; it reads TYSMVGALNKLPIAVSGLVFFAA. Residues 338 to 340 lie on the Lumenal side of the membrane; sequence PVT. Residues 341–360 traverse the membrane as a helical segment; that stretch reads FGSVSAIFIGFVSGIVYAWA. Residues 361 to 392 are Cytoplasmic-facing; the sequence is KVRQNQSKGNILPTTQPVMSASSQSNRDAAKA. Residues 373-392 are disordered; the sequence is PTTQPVMSASSQSNRDAAKA.

Belongs to the TPT transporter family. SLC35D subfamily. Homooligomer.

It localises to the golgi apparatus membrane. It is found in the cytoplasmic vesicle membrane. The protein resides in the endoplasmic reticulum membrane. In terms of biological role, involved in the import of GDP-mannose from the cytoplasm into the Golgi lumen. This is GDP-mannose transporter (gmt1) from Botryotinia fuckeliana (strain B05.10) (Noble rot fungus).